We begin with the raw amino-acid sequence, 158 residues long: Transcription elongation factor GreA (158 aa).

A disordered region spans residues 41 to 61; the sequence is GDLSENAEYHAAKEDQSHNEG. A coiled-coil region spans residues 51–74; that stretch reads AAKEDQSHNEGRIAELEDKLARAE.

It belongs to the GreA/GreB family.

Its function is as follows. Necessary for efficient RNA polymerase transcription elongation past template-encoded arresting sites. The arresting sites in DNA have the property of trapping a certain fraction of elongating RNA polymerases that pass through, resulting in locked ternary complexes. Cleavage of the nascent transcript by cleavage factors such as GreA or GreB allows the resumption of elongation from the new 3'terminus. GreA releases sequences of 2 to 3 nucleotides. This chain is Transcription elongation factor GreA, found in Nitrobacter hamburgensis (strain DSM 10229 / NCIMB 13809 / X14).